The primary structure comprises 195 residues: Rubrerythrin (195 aa).

A Ferritin-like diiron domain is found at 1-150 (MKSLKGTKTA…KLAKNIEEGK (150 aa)). Fe(3+) is bound by residues glutamate 20, glutamate 53, glutamate 98, glutamate 101, glutamate 132, histidine 135, cysteine 162, cysteine 165, cysteine 178, and cysteine 181. A Rubredoxin-like domain is found at 157-195 (VVLWKCGNCGFIWEGAEAPLKCPACLHPQAYFEVFKETY).

As to quaternary structure, homodimer. Possesses two rubredoxin-like centers and two non-sulfur oxo-bridged di-iron centers per dimer. Fe(3+) serves as cofactor.

Its subcellular location is the cytoplasm. Its function is as follows. May provide oxidative stress protection via catalytic reduction of intracellular hydrogen peroxide. The protein is Rubrerythrin (rbr) of Clostridium perfringens (strain 13 / Type A).